The primary structure comprises 157 residues: Ribosome maturation factor RimP (157 aa).

This sequence belongs to the RimP family.

The protein localises to the cytoplasm. Required for maturation of 30S ribosomal subunits. This Limosilactobacillus reuteri (strain DSM 20016) (Lactobacillus reuteri) protein is Ribosome maturation factor RimP.